A 425-amino-acid chain; its full sequence is Formyl-CoA:oxalate CoA-transferase (425 aa).

Residues 17–18 (QS), R38, 72–75 (LDTK), 96–98 (NFG), R104, and 136–139 (KVYE) contribute to the CoA site. D168 acts as the Nucleophile in catalysis. 247–249 (GGQ) contributes to the substrate binding site.

Belongs to the CoA-transferase III family. Frc subfamily. In terms of assembly, homodimer.

It carries out the reaction formyl-CoA + oxalate = oxalyl-CoA + formate. It participates in metabolic intermediate degradation; oxalate degradation; CO(2) and formate from oxalate: step 1/2. In terms of biological role, involved in the catabolism of oxalate and in the adapatation to low pH via the induction of the oxalate-dependent acid tolerance response (ATR). Catalyzes the transfer of the CoA moiety from formyl-CoA to oxalate. In Rhodopseudomonas palustris (strain HaA2), this protein is Formyl-CoA:oxalate CoA-transferase.